The chain runs to 229 residues: Thylakoid lumenal 19 kDa protein, chloroplastic (229 aa).

The protein localises to the plastid. The protein resides in the chloroplast thylakoid lumen. This Arabidopsis thaliana (Mouse-ear cress) protein is Thylakoid lumenal 19 kDa protein, chloroplastic.